A 386-amino-acid chain; its full sequence is Succinate--CoA ligase [ADP-forming] subunit beta (386 aa).

An ATP-grasp domain is found at 9 to 244 (KDLLASYDVP…PSQENVRDVL (236 aa)). ATP-binding positions include Lys-46, 53 to 55 (GRG), Val-102, and Glu-107. Residues Asn-199 and Asp-213 each contribute to the Mg(2+) site. Residues Asn-264 and 321 to 323 (GIM) each bind substrate.

Belongs to the succinate/malate CoA ligase beta subunit family. Heterotetramer of two alpha and two beta subunits. Mg(2+) serves as cofactor.

It carries out the reaction succinate + ATP + CoA = succinyl-CoA + ADP + phosphate. The catalysed reaction is GTP + succinate + CoA = succinyl-CoA + GDP + phosphate. The protein operates within carbohydrate metabolism; tricarboxylic acid cycle; succinate from succinyl-CoA (ligase route): step 1/1. Its function is as follows. Succinyl-CoA synthetase functions in the citric acid cycle (TCA), coupling the hydrolysis of succinyl-CoA to the synthesis of either ATP or GTP and thus represents the only step of substrate-level phosphorylation in the TCA. The beta subunit provides nucleotide specificity of the enzyme and binds the substrate succinate, while the binding sites for coenzyme A and phosphate are found in the alpha subunit. In Chlamydia pneumoniae (Chlamydophila pneumoniae), this protein is Succinate--CoA ligase [ADP-forming] subunit beta.